The primary structure comprises 673 residues: UvrABC system protein B (673 aa).

Residues 26–183 (EGLEDGLAHQ…RRLAELQYTR (158 aa)) enclose the Helicase ATP-binding domain. ATP is bound at residue 39–46 (GVTGSGKT). The Beta-hairpin motif lies at 92-115 (YYDYYQPEAYVPSSDTFIEKDASV). One can recognise a Helicase C-terminal domain in the interval 431 to 597 (QVDDLLSEIR…GLNKKVVDIL (167 aa)). The 36-residue stretch at 633-668 (QQKIHELEGQMMQHAQNLEFEEAAQIRDQLHQLREL) folds into the UVR domain.

Belongs to the UvrB family. As to quaternary structure, forms a heterotetramer with UvrA during the search for lesions. Interacts with UvrC in an incision complex.

The protein localises to the cytoplasm. Its function is as follows. The UvrABC repair system catalyzes the recognition and processing of DNA lesions. A damage recognition complex composed of 2 UvrA and 2 UvrB subunits scans DNA for abnormalities. Upon binding of the UvrA(2)B(2) complex to a putative damaged site, the DNA wraps around one UvrB monomer. DNA wrap is dependent on ATP binding by UvrB and probably causes local melting of the DNA helix, facilitating insertion of UvrB beta-hairpin between the DNA strands. Then UvrB probes one DNA strand for the presence of a lesion. If a lesion is found the UvrA subunits dissociate and the UvrB-DNA preincision complex is formed. This complex is subsequently bound by UvrC and the second UvrB is released. If no lesion is found, the DNA wraps around the other UvrB subunit that will check the other stand for damage. The sequence is that of UvrABC system protein B from Salmonella heidelberg (strain SL476).